A 382-amino-acid polypeptide reads, in one-letter code: Beta-lactamase CMY-10 (382 aa).

Residues 1-23 (MQQRQSILWGAVATLMWAGLAHA) form the signal peptide. Ser88 (acyl-ester intermediate) is an active-site residue. Ser88 contributes to the AMP binding site. GMP-binding residues include Ser88, Gln144, Tyr174, Thr336, Ser338, and Asn363. The IMP site is built by Ser88, Gln144, Tyr174, Thr336, Ser338, and Asn363. Tyr174 is a binding site for AMP. Ser338 is an AMP binding site.

The protein belongs to the class-C beta-lactamase family. In terms of assembly, monomer.

The catalysed reaction is a beta-lactam + H2O = a substituted beta-amino acid. Inhibited by various nucleotides in vitro, including adenosine 5'-(P-acetyl)monophosphate (acAMP), inosine-5'-monophosphate (IMP) and guanosine-5'-monophosphate (GMP); IMP and GMP exhibit strongest competitive inhibition. Inhibited by the beta-lactamase-blocking agent, avibactam. Inhibited by clavulanic acid. Weakly inhibited by citric acid. Class C beta-lactamase which confers resistance to penicillins and cephalosporins. Has benzylpenicillin-, ceftazidime-, nitrocefin- and imipenem-hydrolyzing activity. In Klebsiella aerogenes (Enterobacter aerogenes), this protein is Beta-lactamase CMY-10.